Consider the following 540-residue polypeptide: Chaperonin GroEL (540 aa).

Residues 30–33 (TLGP), 87–91 (DGTTT), Gly414, 479–481 (NAL), and Asp495 contribute to the ATP site.

This sequence belongs to the chaperonin (HSP60) family. In terms of assembly, forms a cylinder of 14 subunits composed of two heptameric rings stacked back-to-back. Interacts with the co-chaperonin GroES.

It localises to the cytoplasm. The enzyme catalyses ATP + H2O + a folded polypeptide = ADP + phosphate + an unfolded polypeptide.. Together with its co-chaperonin GroES, plays an essential role in assisting protein folding. The GroEL-GroES system forms a nano-cage that allows encapsulation of the non-native substrate proteins and provides a physical environment optimized to promote and accelerate protein folding. The sequence is that of Chaperonin GroEL from Rubrobacter xylanophilus (strain DSM 9941 / JCM 11954 / NBRC 16129 / PRD-1).